The chain runs to 315 residues: 4-hydroxy-3-methylbut-2-enyl diphosphate reductase (315 aa).

Cys18 serves as a coordination point for [4Fe-4S] cluster. Residues His47 and His80 each coordinate (2E)-4-hydroxy-3-methylbut-2-enyl diphosphate. Residues His47 and His80 each contribute to the dimethylallyl diphosphate site. Isopentenyl diphosphate contacts are provided by His47 and His80. A [4Fe-4S] cluster-binding site is contributed by Cys102. His130 contacts (2E)-4-hydroxy-3-methylbut-2-enyl diphosphate. Dimethylallyl diphosphate is bound at residue His130. His130 is a binding site for isopentenyl diphosphate. Glu132 (proton donor) is an active-site residue. Thr171 contacts (2E)-4-hydroxy-3-methylbut-2-enyl diphosphate. Cys201 contacts [4Fe-4S] cluster. The (2E)-4-hydroxy-3-methylbut-2-enyl diphosphate site is built by Ser229, Ser230, Asn231, and Ser274. Positions 229, 230, 231, and 274 each coordinate dimethylallyl diphosphate. Residues Ser229, Ser230, Asn231, and Ser274 each coordinate isopentenyl diphosphate.

Belongs to the IspH family. Requires [4Fe-4S] cluster as cofactor.

It carries out the reaction isopentenyl diphosphate + 2 oxidized [2Fe-2S]-[ferredoxin] + H2O = (2E)-4-hydroxy-3-methylbut-2-enyl diphosphate + 2 reduced [2Fe-2S]-[ferredoxin] + 2 H(+). It catalyses the reaction dimethylallyl diphosphate + 2 oxidized [2Fe-2S]-[ferredoxin] + H2O = (2E)-4-hydroxy-3-methylbut-2-enyl diphosphate + 2 reduced [2Fe-2S]-[ferredoxin] + 2 H(+). It functions in the pathway isoprenoid biosynthesis; dimethylallyl diphosphate biosynthesis; dimethylallyl diphosphate from (2E)-4-hydroxy-3-methylbutenyl diphosphate: step 1/1. It participates in isoprenoid biosynthesis; isopentenyl diphosphate biosynthesis via DXP pathway; isopentenyl diphosphate from 1-deoxy-D-xylulose 5-phosphate: step 6/6. Its function is as follows. Catalyzes the conversion of 1-hydroxy-2-methyl-2-(E)-butenyl 4-diphosphate (HMBPP) into a mixture of isopentenyl diphosphate (IPP) and dimethylallyl diphosphate (DMAPP). Acts in the terminal step of the DOXP/MEP pathway for isoprenoid precursor biosynthesis. This is 4-hydroxy-3-methylbut-2-enyl diphosphate reductase from Hyphomonas neptunium (strain ATCC 15444).